Reading from the N-terminus, the 239-residue chain is tRNA1(Val) (adenine(37)-N6)-methyltransferase (239 aa).

Belongs to the methyltransferase superfamily. tRNA (adenine-N(6)-)-methyltransferase family.

It localises to the cytoplasm. It catalyses the reaction adenosine(37) in tRNA1(Val) + S-adenosyl-L-methionine = N(6)-methyladenosine(37) in tRNA1(Val) + S-adenosyl-L-homocysteine + H(+). Its function is as follows. Specifically methylates the adenine in position 37 of tRNA(1)(Val) (anticodon cmo5UAC). The protein is tRNA1(Val) (adenine(37)-N6)-methyltransferase of Vibrio vulnificus (strain CMCP6).